The chain runs to 48 residues: MQVGFVSQTNCRSFPACIVFLFQMSQRQRSFNANLRVFKSKCKKIYIG.

Residues 1–28 constitute a mitochondrion transit peptide; the sequence is MQVGFVSQTNCRSFPACIVFLFQMSQRQ.

Its subcellular location is the mitochondrion. This chain is 2-deoxy-glucose resistant protein 1, mitochondrial (DGR1), found in Saccharomyces cerevisiae (strain ATCC 204508 / S288c) (Baker's yeast).